The chain runs to 250 residues: Small ribosomal subunit protein uS2 (250 aa).

Belongs to the universal ribosomal protein uS2 family.

The protein is Small ribosomal subunit protein uS2 of Acidovorax ebreus (strain TPSY) (Diaphorobacter sp. (strain TPSY)).